Reading from the N-terminus, the 44-residue chain is Photosystem II reaction center protein K (44 aa).

Positions 1 to 7 are excised as a propeptide; it reads MTTLLLA. The chain crosses the membrane as a helical span at residues 19-39; sequence IVDVLPVIPLLFLLLAFVWQA.

It belongs to the PsbK family. PSII is composed of 1 copy each of membrane proteins PsbA, PsbB, PsbC, PsbD, PsbE, PsbF, PsbH, PsbI, PsbJ, PsbK, PsbL, PsbM, PsbT, PsbX, PsbY, PsbZ, Psb30/Ycf12, at least 3 peripheral proteins of the oxygen-evolving complex and a large number of cofactors. It forms dimeric complexes.

The protein resides in the plastid. The protein localises to the chloroplast thylakoid membrane. Its function is as follows. One of the components of the core complex of photosystem II (PSII). PSII is a light-driven water:plastoquinone oxidoreductase that uses light energy to abstract electrons from H(2)O, generating O(2) and a proton gradient subsequently used for ATP formation. It consists of a core antenna complex that captures photons, and an electron transfer chain that converts photonic excitation into a charge separation. The chain is Photosystem II reaction center protein K from Tupiella akineta (Green alga).